The following is a 226-amino-acid chain: Phosphoglycolate phosphatase (226 aa).

Catalysis depends on Asp9, which acts as the Nucleophile. Residues Asp9 and Asp11 each coordinate Mg(2+). Lys150 contacts substrate. Mg(2+)-binding residues include Asp173 and Asp177.

This sequence belongs to the archaeal SPP-like hydrolase family. Mg(2+) is required as a cofactor.

The catalysed reaction is 2-phosphoglycolate + H2O = glycolate + phosphate. Functionally, catalyzes the dephosphorylation of 2-phosphoglycolate. This Methanosarcina acetivorans (strain ATCC 35395 / DSM 2834 / JCM 12185 / C2A) protein is Phosphoglycolate phosphatase.